We begin with the raw amino-acid sequence, 347 residues long: UPF0324 membrane protein Atu0671 (347 aa).

Helical transmembrane passes span 15-37 (LRWLSPLLPGILICAAVSCAAIL), 50-72 (WLGDLVLAILIGTLLRSLVSLPV), 105-127 (AGGLLIGGIALIVALSLVFSYAA), 140-162 (LIACGNSICGNSAIAAAAPAIGA), 172-194 (AFTAVLGVVAVLLMPFLPQLLGL), 201-223 (IFAGLTVYAVPQVLAATAPLGAV), 233-250 (LIRVLMLGPVIATLSVIH), 263-282 (MVPWFIIGFVLMIMARSFGL), 287-309 (LLSPVASLSNILTIMSMAALGLS), and 322-344 (VIIAASLSLVLLGVLSFGLILLT).

This sequence belongs to the UPF0324 family.

The protein localises to the cell membrane. This is UPF0324 membrane protein Atu0671 from Agrobacterium fabrum (strain C58 / ATCC 33970) (Agrobacterium tumefaciens (strain C58)).